Consider the following 334-residue polypeptide: Beta-hexosaminidase (334 aa).

Substrate is bound by residues aspartate 62, arginine 70, arginine 130, and 160–161 (KH). The Proton donor/acceptor role is filled by histidine 173. Aspartate 243 functions as the Nucleophile in the catalytic mechanism.

It belongs to the glycosyl hydrolase 3 family. NagZ subfamily.

It is found in the cytoplasm. The enzyme catalyses Hydrolysis of terminal non-reducing N-acetyl-D-hexosamine residues in N-acetyl-beta-D-hexosaminides.. It functions in the pathway cell wall biogenesis; peptidoglycan recycling. In terms of biological role, plays a role in peptidoglycan recycling by cleaving the terminal beta-1,4-linked N-acetylglucosamine (GlcNAc) from peptide-linked peptidoglycan fragments, giving rise to free GlcNAc, anhydro-N-acetylmuramic acid and anhydro-N-acetylmuramic acid-linked peptides. In Photobacterium profundum (strain SS9), this protein is Beta-hexosaminidase.